A 1097-amino-acid chain; its full sequence is DNA-directed RNA polymerase subunit beta (1097 aa).

Positions 1072–1097 (QDINPRRNTPSRPTYESLGTSEYEED) are disordered. Residues 1077 to 1091 (RRNTPSRPTYESLGT) show a composition bias toward polar residues.

It belongs to the RNA polymerase beta chain family. In cyanobacteria the RNAP catalytic core is composed of 2 alpha, 1 beta, 1 beta', 1 gamma and 1 omega subunit. When a sigma factor is associated with the core the holoenzyme is formed, which can initiate transcription.

The enzyme catalyses RNA(n) + a ribonucleoside 5'-triphosphate = RNA(n+1) + diphosphate. Its function is as follows. DNA-dependent RNA polymerase catalyzes the transcription of DNA into RNA using the four ribonucleoside triphosphates as substrates. The sequence is that of DNA-directed RNA polymerase subunit beta from Prochlorococcus marinus (strain MIT 9215).